The primary structure comprises 119 residues: Protein TusC (119 aa).

It belongs to the DsrF/TusC family. As to quaternary structure, heterohexamer, formed by a dimer of trimers. The hexameric TusBCD complex contains 2 copies each of TusB, TusC and TusD. The TusBCD complex interacts with TusE.

It localises to the cytoplasm. Its function is as follows. Part of a sulfur-relay system required for 2-thiolation of 5-methylaminomethyl-2-thiouridine (mnm(5)s(2)U) at tRNA wobble positions. The sequence is that of Protein TusC from Escherichia fergusonii (strain ATCC 35469 / DSM 13698 / CCUG 18766 / IAM 14443 / JCM 21226 / LMG 7866 / NBRC 102419 / NCTC 12128 / CDC 0568-73).